Consider the following 144-residue polypeptide: Maximins 1/H1 (144 aa).

Positions 1-18 are cleaved as a signal peptide; the sequence is MNFKYIVAVSFLLASAYA. Residues 19 to 43 constitute a propeptide that is removed on maturation; it reads RSEENDEQSLSQRDVLEEESLREIR. Asn-70 carries the asparagine amide modification. Residues 74-123 constitute a propeptide that is removed on maturation; sequence TAEEHEVMKRLEAVMRDLDSLDYPEEAAERETRSFNQEEIANLFTKKEKR. Leucine amide is present on Leu-143.

Belongs to the bombinin family. As to expression, expressed by the skin glands.

Its subcellular location is the secreted. Functionally, antibacterial peptide with amphipathic alpha-helical structure that has activity against both Gram-positive and Gram-negative bacteria. Also shows antimicrobial activity against the fungus C.albicans, but not against A.flavus nor P.uticale. It has little hemolytic activity. It possess a significant cytotoxicity against tumor cell lines, but does not possess a significant anti-HIV activity. Also shows high spermicidal activity. In terms of biological role, antibacterial peptide with activity against both Gram-positive and Gram-negative bacteria. Also shows antimicrobial activity against the fungus C.albicans. In addition, shows strong hemolytic activity. This is Maximins 1/H1 from Bombina maxima (Giant fire-bellied toad).